The sequence spans 262 residues: Tryptophan synthase alpha chain (262 aa).

Residues Glu49 and Asp60 each act as proton acceptor in the active site.

The protein belongs to the TrpA family. As to quaternary structure, tetramer of two alpha and two beta chains.

The enzyme catalyses (1S,2R)-1-C-(indol-3-yl)glycerol 3-phosphate + L-serine = D-glyceraldehyde 3-phosphate + L-tryptophan + H2O. It participates in amino-acid biosynthesis; L-tryptophan biosynthesis; L-tryptophan from chorismate: step 5/5. The alpha subunit is responsible for the aldol cleavage of indoleglycerol phosphate to indole and glyceraldehyde 3-phosphate. This is Tryptophan synthase alpha chain from Aquifex aeolicus (strain VF5).